Here is a 105-residue protein sequence, read N- to C-terminus: Nucleoid-associated protein Lm4b_02677 (105 aa).

Positions 1-16 are enriched in low complexity; that stretch reads MRGMGNMQGMMKQMQK. Positions 1–23 are disordered; sequence MRGMGNMQGMMKQMQKMQKEMAK.

The protein belongs to the YbaB/EbfC family. In terms of assembly, homodimer.

It localises to the cytoplasm. The protein resides in the nucleoid. Functionally, binds to DNA and alters its conformation. May be involved in regulation of gene expression, nucleoid organization and DNA protection. The chain is Nucleoid-associated protein Lm4b_02677 from Listeria monocytogenes serotype 4b (strain CLIP80459).